Consider the following 78-residue polypeptide: Beta-defensin 29 (78 aa).

The first 23 residues, 1 to 23 (MPVTKPYFVTVAVLLILVDKTTG), serve as a signal peptide directing secretion. 3 cysteine pairs are disulfide-bonded: Cys-40–Cys-67, Cys-47–Cys-61, and Cys-51–Cys-68.

The protein belongs to the beta-defensin family.

It is found in the secreted. Its function is as follows. Has antibacterial activity. This is Beta-defensin 29 (Defb29) from Rattus norvegicus (Rat).